The primary structure comprises 393 residues: Methylthioribose kinase (393 aa).

Residues asparagine 38, lysine 53, and 107–109 (EDL) contribute to the ATP site. Residue aspartate 225 coordinates substrate. 242–244 (DPE) contributes to the ATP binding site. Arginine 332 serves as a coordination point for substrate.

Belongs to the methylthioribose kinase family. As to quaternary structure, homodimer.

It carries out the reaction 5-(methylsulfanyl)-D-ribose + ATP = 5-(methylsulfanyl)-alpha-D-ribose 1-phosphate + ADP + H(+). The protein operates within amino-acid biosynthesis; L-methionine biosynthesis via salvage pathway; S-methyl-5-thio-alpha-D-ribose 1-phosphate from S-methyl-5'-thioadenosine (hydrolase route): step 2/2. Functionally, catalyzes the phosphorylation of methylthioribose into methylthioribose-1-phosphate. The protein is Methylthioribose kinase of Bacillus cereus (strain AH820).